Reading from the N-terminus, the 223-residue chain is MOB-like protein phocein (223 aa).

A disordered region spans residues 1 to 23 (MTAATENRTVRRNGPGTKRADWN). 4 residues coordinate Zn(2+): cysteine 92, cysteine 97, histidine 169, and histidine 174.

This sequence belongs to the MOB1/phocein family.

It is found in the cytoplasm. It localises to the perinuclear region. The protein localises to the membrane. Its subcellular location is the golgi apparatus. The protein resides in the golgi stack membrane. Functionally, may play a role in membrane trafficking, specifically in membrane budding reactions. This Caenorhabditis elegans protein is MOB-like protein phocein.